A 71-amino-acid polypeptide reads, in one-letter code: Exodeoxyribonuclease 7 small subunit (71 aa).

Belongs to the XseB family. As to quaternary structure, heterooligomer composed of large and small subunits.

The protein resides in the cytoplasm. It carries out the reaction Exonucleolytic cleavage in either 5'- to 3'- or 3'- to 5'-direction to yield nucleoside 5'-phosphates.. In terms of biological role, bidirectionally degrades single-stranded DNA into large acid-insoluble oligonucleotides, which are then degraded further into small acid-soluble oligonucleotides. The sequence is that of Exodeoxyribonuclease 7 small subunit from Clostridium botulinum (strain Kyoto / Type A2).